Consider the following 201-residue polypeptide: GTP cyclohydrolase 1 (201 aa).

Residues cysteine 90, histidine 93, and cysteine 163 each contribute to the Zn(2+) site.

This sequence belongs to the GTP cyclohydrolase I family. As to quaternary structure, toroid-shaped homodecamer, composed of two pentamers of five dimers.

It carries out the reaction GTP + H2O = 7,8-dihydroneopterin 3'-triphosphate + formate + H(+). It functions in the pathway cofactor biosynthesis; 7,8-dihydroneopterin triphosphate biosynthesis; 7,8-dihydroneopterin triphosphate from GTP: step 1/1. This is GTP cyclohydrolase 1 from Streptomyces avermitilis (strain ATCC 31267 / DSM 46492 / JCM 5070 / NBRC 14893 / NCIMB 12804 / NRRL 8165 / MA-4680).